The following is a 499-amino-acid chain: Cytochrome P450 monooxygenase ausI (499 aa).

The chain crosses the membrane as a helical span at residues Pro10 to Tyr30. Residue Cys439 coordinates heme. Asn483 carries an N-linked (GlcNAc...) asparagine glycan.

The protein belongs to the cytochrome P450 family. It depends on heme as a cofactor.

The protein resides in the membrane. It participates in secondary metabolite biosynthesis; terpenoid biosynthesis. Cytochrome P450 monooxygenase; part of the gene cluster B that mediates the biosynthesis of austinol and dehydroaustinol, two fungal meroterpenoids. The first step of the pathway is the synthesis of 3,5-dimethylorsellinic acid by the polyketide synthase ausA. 3,5-dimethylorsellinic acid is then prenylated by the polyprenyl transferase ausN. Further epoxidation by the FAD-dependent monooxygenase ausM and cyclization by the probable terpene cyclase ausL lead to the formation of protoaustinoid A. Protoaustinoid A is then oxidized to spiro-lactone preaustinoid A3 by the combined action of the FAD-binding monooxygenases ausB and ausC, and the dioxygenase ausE. Acid-catalyzed keto-rearrangement and ring contraction of the tetraketide portion of preaustinoid A3 by ausJ lead to the formation of preaustinoid A4. The aldo-keto reductase ausK, with the help of ausH, is involved in the next step by transforming preaustinoid A4 into isoaustinone which is in turn hydroxylated by the P450 monooxygenase ausI to form austinolide. Finally, the cytochrome P450 monooxygenase ausG modifies austinolide to austinol. Austinol can be further modified to dehydroaustinol which forms a diffusible complex with diorcinol that initiates conidiation. Due to genetic rearrangements of the clusters and the subsequent loss of some enzymes, the end products of the Emericella nidulans austinoid biosynthesis clusters are austinol and dehydroaustinol, even if additional enzymes, such as the O-acetyltransferase ausQ and the cytochrome P450 monooxygenase ausR are still functional. This Emericella nidulans (strain FGSC A4 / ATCC 38163 / CBS 112.46 / NRRL 194 / M139) (Aspergillus nidulans) protein is Cytochrome P450 monooxygenase ausI.